Reading from the N-terminus, the 120-residue chain is Large ribosomal subunit protein bL19 (120 aa).

The protein belongs to the bacterial ribosomal protein bL19 family.

In terms of biological role, this protein is located at the 30S-50S ribosomal subunit interface and may play a role in the structure and function of the aminoacyl-tRNA binding site. This is Large ribosomal subunit protein bL19 from Chlorobium limicola (strain DSM 245 / NBRC 103803 / 6330).